Reading from the N-terminus, the 1265-residue chain is MVKISEIARTSTFAWSSKNLPLLAAGTVAGAVDINFSSSATLELWDIFSPTNKTEPIFSATVDNRFYALAWSKPFEGRPQGLLAGAFENGTVEFWDADVLIKTKDLAKASVHKSNKHTGAVKSLQFNPIQNHVLVTGGSNGQIFIWDTKTFSEPFAPGQAMTPMDEITSVSWNNSVSHILASTGNGGYTSIWDLKTKREVLHLSYTGAGGRANFSYVSWHPSQSTKLITASDNDSCPLILTWDLRNSNAPEKILEGHKKGVLSLDWCKQDPTLLLSSGKDNSTFLWNPIEGIKLGEYPTTANWAFETKFAPAAPDIFATASFDGKVVVQTIQDTSPSVSTKVASTDDNEFWSELSTTETQQPVFEVKQAPNWLKNPSNVSFGFGSKLVIINTDSSGKSTVKVDKFVAKGQEKTEKLFKDLKNDNYSSLIQDKLEGETVNENNKSDWEVLKRLSETGKESLFEDANNDEKEATSPETKKENGEDDFFEHLGNGETAKKEEVFVPEGNFKIFTNNENEDSKKLINLILRNKTEEAVSSCLEQKKLVEALVLALDGSDDVKQQVKNAYFKKNKENNLSRVIYNASTKNVTDLVAHANVENWKEVAVGISSFTTDSSEYNSKMSELGDRILKAKDGKRNDAVVCYLAGGALDKISNLWLQELPDYESELLSLKSEEITSPSDARLQALTNFVEKVATYRYITKSTGEFSGPMVEPLAKAILEFVNLVAGSGDFDLANKFLQLLPSEFSGTEKERILKATSKAVEPASAVKSSANAKIAKPASSSGQTRASINAVPAPAYAPPVQAPPVQAPQPPLVQQQQQQQQQQQPNRYGYAQPTYAGAAPKTNPYARTNPYAPSNNIYKPASPVATPSSLSGTTSGVPPPPPKASYKHETEGWNDLPDTFKAKTAAPRRAAAAATPPVSTPTPVSAPAFGSPGQPPSAPSQPGSVGSVSSAGYPKKTFSATNVLPPPPKSISRSTSRTTVPTSSTVPASPKPTPVSNKYAPAVTSDASQPPSSGFASPTLNSSPRLAKNPYAPSVTEQLPPKISYATPPAHHLANNGPSTPSYAPPKNPYAVPPSTSVSHAGIAPPPPAPKLGSAAPPPPQPFGSSMSMPVQPAFNGVPPPPPPVGRAVSTPAAAKIEQPPAREPELPVQSKHPKGDRTHIPENSLPIYNSLTNVLEAIKPNIPEKYAKHGTDMEQRLNILFDHLNNEEISNGVIELLLKVATSLESKDFANATAVNLQIATEHSDEIGNWHTGLKRLITMAEAMY.

7 WD repeats span residues 6–46 (EIAR…ELWD), 61–105 (TVDN…KTKD), 116–156 (KHTG…EPFA), 162–202 (TPMD…EVLH), 209–252 (GGRA…APEK), 256–296 (GHKK…KLGE), and 299–339 (TTAN…PSVS). The WD 8; interaction with SEC13 repeat unit spans residues 380–403 (SFGFGSKLVIINTDSSGKSTVKVD). A compositionally biased stretch (basic and acidic residues) spans 457 to 480 (KESLFEDANNDEKEATSPETKKEN). Disordered regions lie at residues 457–485 (KESLFEDANNDEKEATSPETKKENGEDDF), 765–784 (VKSSANAKIAKPASSSGQTR), and 793–1163 (PAYA…IPEN). The segment covering 794 to 810 (AYAPPVQAPPVQAPQPP) has biased composition (pro residues). Composition is skewed to low complexity over residues 811-824 (LVQQQQQQQQQQQP), 865-875 (TPSSLSGTTSG), 901-931 (AKTAAPRRAAAAATPPVSTPTPVSAPAFGSP), 939-951 (SQPGSVGSVSSAG), and 969-987 (SISRSTSRTTVPTSSTVPA). The segment covering 1004–1023 (SDASQPPSSGFASPTLNSSP) has biased composition (polar residues). Pro residues-rich tracts occupy residues 1062–1071 (YAPPKNPYAV) and 1083–1101 (APPPPAPKLGSAAPPPPQP).

Belongs to the WD repeat SEC31 family. The COPII coat is composed of at least 5 proteins: the SEC23/24 complex, the SEC13/31 complex, and the protein SAR1. SEC13 and SEC31 make a 2:2 tetramer that forms the edge element of the COPII outer coat. The tetramer self-assembles in multiple copies to form the complete polyhedral cage. Interacts (via WD 8) with SEC13.

Its subcellular location is the cytoplasmic vesicle. The protein localises to the COPII-coated vesicle membrane. It is found in the endoplasmic reticulum membrane. Functionally, component of the coat protein complex II (COPII) which promotes the formation of transport vesicles from the endoplasmic reticulum (ER). The coat has two main functions, the physical deformation of the endoplasmic reticulum membrane into vesicles and the selection of cargo molecules. This chain is Protein transport protein SEC31 (PGA63), found in Candida albicans (strain SC5314 / ATCC MYA-2876) (Yeast).